The following is a 307-amino-acid chain: Ornithine carbamoyltransferase (307 aa).

Residues 53–56 (STRT), Q80, R104, and 131–134 (HPCQ) each bind carbamoyl phosphate. L-ornithine-binding positions include N162, D220, and 224–225 (SM). Residues 260 to 261 (CL) and R288 each bind carbamoyl phosphate.

The protein belongs to the aspartate/ornithine carbamoyltransferase superfamily. OTCase family.

It localises to the cytoplasm. It carries out the reaction carbamoyl phosphate + L-ornithine = L-citrulline + phosphate + H(+). Its pathway is amino-acid biosynthesis; L-arginine biosynthesis; L-arginine from L-ornithine and carbamoyl phosphate: step 1/3. Its function is as follows. Reversibly catalyzes the transfer of the carbamoyl group from carbamoyl phosphate (CP) to the N(epsilon) atom of ornithine (ORN) to produce L-citrulline. The sequence is that of Ornithine carbamoyltransferase from Nitrosomonas europaea (strain ATCC 19718 / CIP 103999 / KCTC 2705 / NBRC 14298).